The following is a 972-amino-acid chain: FHF complex subunit HOOK-interacting protein 1B (972 aa).

Disordered regions lie at residues 465 to 548 and 573 to 644; these read APSP…GELE and SAPY…SWPE. S467 carries the phosphoserine modification. Low complexity predominate over residues 478–501; it reads RGPGSPSVDSSSVTTVPRPSTPSR. Phosphoserine occurs at positions 510, 523, 529, and 533. The segment covering 523–535 has biased composition (low complexity); it reads SPGLSASPASSPG. A phosphoserine mark is found at S859 and S897.

This sequence belongs to the FHIP family. As to quaternary structure, component of the FTS/Hook/FHIP complex (FHF complex), composed of AKTIP/FTS, FHIP1B, and one or more members of the Hook family of proteins HOOK1, HOOK2, and HOOK3. The FHF complex associates with the homotypic vesicular sorting complex (the HOPS complex).

In terms of biological role, component of the FTS/Hook/FHIP complex (FHF complex). The FHF complex may function to promote vesicle trafficking and/or fusion via the homotypic vesicular protein sorting complex (the HOPS complex). FHF complex promotes the distribution of AP-4 complex to the perinuclear area of the cell. The chain is FHF complex subunit HOOK-interacting protein 1B from Homo sapiens (Human).